Consider the following 500-residue polypeptide: Autophagy-related protein 18 (500 aa).

The WD 1 repeat unit spans residues 3-41 (DSSPTINFINFNQTGTCISLGTSKGFKIFNCEPFGKFYS). The interval 174 to 197 (VGGNTETSFKRDQQDAGHSDISDL) is disordered. The segment covering 181–194 (SFKRDQQDAGHSDI) has biased composition (basic and acidic residues). WD repeat units lie at residues 243 to 283 (AHKG…KIYQ) and 288 to 327 (TYATRIYSISFSEDSQYLAVTGSSKTVHIFKLGHSMSNNK). A L/FRRG motif motif is present at residues 284–288 (FRRGT). Positions 328-358 (LDSDDSNMEEAAADDSSLDTTSIDALSDEEN) are disordered. Acidic residues predominate over residues 331-344 (DDSNMEEAAADDSS). Position 354 is a phosphoserine (S354).

The protein belongs to the WD repeat PROPPIN family. As to quaternary structure, component of the PI(3,5)P2 regulatory complex, composed of ATG18, FIG4, FAB1, VAC14 and VAC7. VAC14 nucleates the assembly of the complex and serves as a scaffold. Interacts with ATG2, ATG9 and VAC17. The ATG2-ATG18 complex is essential for autophagosome formation.

The protein resides in the preautophagosomal structure membrane. It is found in the vacuole membrane. Its subcellular location is the endosome membrane. The PI(3,5)P2 regulatory complex regulates both the synthesis and turnover of phosphatidylinositol 3,5-bisphosphate (PtdIns(3,5)P2). May negatively regulate FAB1 activity by sequestering or masking VAC7 from FAB1. Necessary for proper vacuole morphology. Plays an important role in osmotically-induced vacuole fragmentation. Required for cytoplasm to vacuole transport (Cvt) vesicle formation, pexophagy and starvation-induced autophagy. Involved in correct ATG9 trafficking to the pre-autophagosomal structure. Might also be involved in premeiotic DNA replication. With ATG2, protects ATG8 from ARG4-mediated cleavage. The protein is Autophagy-related protein 18 (ATG18) of Saccharomyces cerevisiae (strain YJM789) (Baker's yeast).